The chain runs to 196 residues: Large ribosomal subunit protein bL25 (196 aa).

Belongs to the bacterial ribosomal protein bL25 family. CTC subfamily. Part of the 50S ribosomal subunit; part of the 5S rRNA/L5/L18/L25 subcomplex. Contacts the 5S rRNA. Binds to the 5S rRNA independently of L5 and L18.

Functionally, this is one of the proteins that binds to the 5S RNA in the ribosome where it forms part of the central protuberance. This chain is Large ribosomal subunit protein bL25, found in Amoebophilus asiaticus (strain 5a2).